The primary structure comprises 62 residues: Conotoxin Gm5.2 (62 aa).

An N-terminal signal peptide occupies residues 1–22 (MRCLPVFVILLLLIASAPSVDA). Positions 23 to 49 (QPKTKDDVPLAPLHDNIRSTLQTLRKK) are excised as a propeptide. Ser-60 carries the post-translational modification Serine amide.

The protein belongs to the conotoxin T superfamily. Contains 2 disulfide bonds that can be either 'C1-C3, C2-C4' or 'C1-C4, C2-C3', since these disulfide connectivities have been observed for conotoxins with cysteine framework V (for examples, see AC P0DQQ7 and AC P81755). As to expression, expressed by the venom duct.

The protein resides in the secreted. This is Conotoxin Gm5.2 from Conus gloriamaris (Glory-of-the-Sea cone).